Reading from the N-terminus, the 127-residue chain is uncharacterized protein (127 aa).

It localises to the mitochondrion. This is an uncharacterized protein from Arabidopsis thaliana (Mouse-ear cress).